The sequence spans 533 residues: Portal protein B (533 aa).

It belongs to the siphoviridae portal protein family. Homododecamer. Interacts with the terminase complex composed of two small and one large terminase subunits. Proteolytically cleaved by the viral protease during capsid maturation.

The protein localises to the virion. Functionally, forms the portal vertex of the capsid. This portal plays critical roles in head assembly, genome packaging, neck/tail attachment, and genome ejection. The portal protein multimerizes as a single ring-shaped homododecamer arranged around a central channel. Binds to the terminase subunits to form the packaging machine. In Escherichia phage lambda (Bacteriophage lambda), this protein is Portal protein B.